A 235-amino-acid chain; its full sequence is Large ribosomal subunit protein uL1 (235 aa).

Belongs to the universal ribosomal protein uL1 family. As to quaternary structure, part of the 50S ribosomal subunit.

Functionally, binds directly to 23S rRNA. The L1 stalk is quite mobile in the ribosome, and is involved in E site tRNA release. Its function is as follows. Protein L1 is also a translational repressor protein, it controls the translation of the L11 operon by binding to its mRNA. In Nitratidesulfovibrio vulgaris (strain DSM 19637 / Miyazaki F) (Desulfovibrio vulgaris), this protein is Large ribosomal subunit protein uL1.